The following is a 491-amino-acid chain: Nucleoside transporter 1.1 (491 aa).

Transmembrane regions (helical) follow at residues 27 to 47, 82 to 102, 109 to 129, 136 to 156, 173 to 193, and 209 to 229; these read FYVY…VNAV, YNLI…LSWF, VRLL…MVVP, AGAV…KSIF, STMM…QIIV, and KIYY…LILL. Residues 260–273 are compositionally biased toward basic and acidic residues; that stretch reads CHTDEHPTHDKEGR. Disordered stretches follow at residues 260–280 and 290–309; these read CHTD…SGKE and AAAK…PHEV. N274 carries an N-linked (GlcNAc...) asparagine glycan. The next 5 helical transmembrane spans lie at 333–353, 361–381, 395–415, 427–447, and 460–480; these read MFVA…GIAV, WFST…RFSP, WIIV…LLHS, VMEV…LVLG, and FVAG…GTVL.

The protein belongs to the SLC29A/ENT transporter (TC 2.A.57) family.

The protein resides in the membrane. The enzyme catalyses adenosine(in) + H(+)(in) = adenosine(out) + H(+)(out). The catalysed reaction is uridine(in) + H(+)(in) = uridine(out) + H(+)(out). Its function is as follows. Sodium-independent high affinity nucleoside:H(+) symporter; transports adenosine and uridine. Can transport cytidine and thymidine. This chain is Nucleoside transporter 1.1, found in Leishmania donovani.